The sequence spans 200 residues: Recombination protein RecR (200 aa).

A C4-type zinc finger spans residues 60 to 75 (CVYCQALTEDDVCNIC). Residues 83-177 (TKLCIIESML…KISRIGFGVP (95 aa)) form the Toprim domain.

It belongs to the RecR family.

Functionally, may play a role in DNA repair. It seems to be involved in an RecBC-independent recombinational process of DNA repair. It may act with RecF and RecO. In Francisella tularensis subsp. holarctica (strain OSU18), this protein is Recombination protein RecR.